A 227-amino-acid chain; its full sequence is Urease subunit gamma/beta (227 aa).

The urease gamma stretch occupies residues 1–101 (MRLTPTERDR…LAVVADPVGG (101 aa)). Positions 102–227 (GGLGDDAPGA…AACGYLGADR (126 aa)) are urease beta.

In the N-terminal section; belongs to the urease gamma subunit family. It in the C-terminal section; belongs to the urease beta subunit family. Heterohexamer of 3 UreC (alpha) and 3 UreAB (gamma/beta) subunits.

The protein resides in the cytoplasm. The enzyme catalyses urea + 2 H2O + H(+) = hydrogencarbonate + 2 NH4(+). It participates in nitrogen metabolism; urea degradation; CO(2) and NH(3) from urea (urease route): step 1/1. This Streptomyces coelicolor (strain ATCC BAA-471 / A3(2) / M145) protein is Urease subunit gamma/beta.